Reading from the N-terminus, the 200-residue chain is Late embryogenesis abundant protein 19 (200 aa).

2 disordered regions span residues 1 to 145 and 172 to 200; these read MASH…KTGS and TEDE…ARDH. Composition is skewed to basic and acidic residues over residues 13–23, 30–42, 53–81, 88–97, and 105–114; these read GETKAHTEEKA, SKDK…DRAS, QDTK…KDKT, ARDKAAESKD, and EKTEQAKQKA. A coiled-coil region spans residues 52-81; it reads GQDTKEATKEKAQAAKERASETAQAAKDKT. Composition is skewed to low complexity over residues 115–130 and 186–200; these read AETA…ETAQ and TSAT…ARDH.

It belongs to the LEA type 4 family.

Functionally, involved in response to stress. The chain is Late embryogenesis abundant protein 19 from Oryza sativa subsp. japonica (Rice).